A 348-amino-acid chain; its full sequence is Dihydroorotase (348 aa).

Zn(2+) contacts are provided by histidine 14 and histidine 16. Substrate-binding positions include 16–18 (HLR) and asparagine 42. Residues lysine 100, histidine 137, and histidine 175 each coordinate Zn(2+). Residue lysine 100 is modified to N6-carboxylysine. Histidine 137 is a substrate binding site. Leucine 220 contacts substrate. Residue aspartate 248 coordinates Zn(2+). The active site involves aspartate 248. 2 residues coordinate substrate: histidine 252 and alanine 264.

Belongs to the metallo-dependent hydrolases superfamily. DHOase family. Class II DHOase subfamily. In terms of assembly, homodimer. Zn(2+) is required as a cofactor.

It catalyses the reaction (S)-dihydroorotate + H2O = N-carbamoyl-L-aspartate + H(+). It functions in the pathway pyrimidine metabolism; UMP biosynthesis via de novo pathway; (S)-dihydroorotate from bicarbonate: step 3/3. Functionally, catalyzes the reversible cyclization of carbamoyl aspartate to dihydroorotate. In Pseudomonas putida (strain ATCC 47054 / DSM 6125 / CFBP 8728 / NCIMB 11950 / KT2440), this protein is Dihydroorotase.